The primary structure comprises 123 residues: uncharacterized protein (123 aa).

Residues 5–25 form a helical membrane-spanning segment; that stretch reads GTLVIIFAIVLILCIMLLFFY. Residues 32–53 form a disordered region; sequence KSGVLPPPIPPPTPPPPKKKYD. Residues 36 to 47 show a composition bias toward pro residues; sequence LPPPIPPPTPPP.

It belongs to the asfivirus CP123L family.

It localises to the host membrane. The protein resides in the virion. This is an uncharacterized protein from Ornithodoros (relapsing fever ticks).